We begin with the raw amino-acid sequence, 409 residues long: Elongation factor Tu, chloroplastic (409 aa).

The tr-type G domain maps to Lys10 to Thr214. A G1 region spans residues Gly19–Thr26. GTP is bound at residue Gly19 to Thr26. Mg(2+) is bound at residue Thr26. Lys57 is modified (N6-methyllysine). The G2 stretch occupies residues Gly60–Asn64. A G3 region spans residues Asp81–Gly84. GTP is bound by residues Asp81–His85 and Asn136–Asp139. Positions Asn136–Asp139 are G4. The tract at residues Ser174–Leu176 is G5.

It belongs to the TRAFAC class translation factor GTPase superfamily. Classic translation factor GTPase family. EF-Tu/EF-1A subfamily.

Its subcellular location is the plastid. It is found in the chloroplast. It catalyses the reaction GTP + H2O = GDP + phosphate + H(+). GTP hydrolase that promotes the GTP-dependent binding of aminoacyl-tRNA to the A-site of ribosomes during protein biosynthesis. This Euglena gracilis protein is Elongation factor Tu, chloroplastic (tufA).